A 204-amino-acid polypeptide reads, in one-letter code: Inactive ribonuclease-like protein 9 (204 aa).

The first 26 residues, 1–26, serve as a signal peptide directing secretion; sequence MMRTLITTHPLLLLLLLQQLLQPVQF. 3 cysteine pairs are disulfide-bonded: Cys97–Cys152, Cys115–Cys167, and Cys122–Cys129. N-linked (GlcNAc...) asparagine glycosylation is found at Asn130 and Asn142.

Belongs to the pancreatic ribonuclease family.

It localises to the secreted. Functionally, does not exhibit any ribonuclease activity. The sequence is that of Inactive ribonuclease-like protein 9 (RNASE9) from Macaca mulatta (Rhesus macaque).